The sequence spans 373 residues: Nuclear migration protein JNM1 (373 aa).

The disordered stretch occupies residues 33 to 53 (EVKEDGQQEEQEEASSRKDGL). Phosphoserine is present on serine 91. Coiled-coil stretches lie at residues 114-139 (KIENLTSEMQTEIKELCEIQSKLATE), 200-245 (EDRK…EFEN), and 331-367 (WLKALNELDKKFDEQEVKIRENMEQIRRKIDTLEDEA).

Component of the dynactin complex composed of at least ARP1, JNM1, NIP100 and ARP10. Dynactin comprises a short rod of ARP1 polymers attached to ARP10 at its pointed-end and probably associated with the capping protein at its barbed-end. The rod structure is implicated in dynein cargo binding. A sidearm formed by NIP100 projects from the ARP1 filament and is implicated in motor binding. Interacts with ARP1.

Its subcellular location is the cytoplasm. The protein resides in the cytoskeleton. In terms of biological role, component of the dynactin complex which assists cytoplasmic dynein by increasing its processivity and by regulation of its cargo binding. The dynactin complex is required for the spindle translocation late in anaphase and is involved in a cell wall synthesis checkpoint. JNM1 is associated with the rod and links it to the projecting sidearm. Required for proper nuclear migration during the mitotic cell cycle and for astral microtubule development. This is Nuclear migration protein JNM1 (JNM1) from Saccharomyces cerevisiae (strain ATCC 204508 / S288c) (Baker's yeast).